The sequence spans 458 residues: RuvB-like helicase 1 (458 aa).

Residues 1 to 29 are disordered; the sequence is MVQISEVKGNSRDNRTAAHTHIKGLGLRP. Residue 71–78 participates in ATP binding; sequence GGPGTGKT.

This sequence belongs to the RuvB family. May form heterododecamers with RVB2. Component of the SWR1 chromatin remodeling complex, the INO80 chromatin remodeling complex, and of the R2TP complex.

Its subcellular location is the nucleus. It carries out the reaction ATP + H2O = ADP + phosphate + H(+). DNA helicase which participates in several chromatin remodeling complexes, including the SWR1 and the INO80 complexes. The SWR1 complex mediates the ATP-dependent exchange of histone H2A for the H2A variant HZT1 leading to transcriptional regulation of selected genes by chromatin remodeling. The INO80 complex remodels chromatin by shifting nucleosomes and is involved in DNA repair. Also involved in pre-rRNA processing. The sequence is that of RuvB-like helicase 1 (rvb1) from Emericella nidulans (strain FGSC A4 / ATCC 38163 / CBS 112.46 / NRRL 194 / M139) (Aspergillus nidulans).